A 206-amino-acid chain; its full sequence is Thymidylate kinase (206 aa).

An ATP-binding site is contributed by 16–23 (GIDGTGKS).

This sequence belongs to the thymidylate kinase family.

It carries out the reaction dTMP + ATP = dTDP + ADP. Phosphorylation of dTMP to form dTDP in both de novo and salvage pathways of dTTP synthesis. This is Thymidylate kinase from Akkermansia muciniphila (strain ATCC BAA-835 / DSM 22959 / JCM 33894 / BCRC 81048 / CCUG 64013 / CIP 107961 / Muc).